Here is a 231-residue protein sequence, read N- to C-terminus: Ribonuclease P protein component 3 (231 aa).

It belongs to the eukaryotic/archaeal RNase P protein component 3 family. Consists of a catalytic RNA component and at least 4-5 protein subunits.

The protein localises to the cytoplasm. It catalyses the reaction Endonucleolytic cleavage of RNA, removing 5'-extranucleotides from tRNA precursor.. Functionally, part of ribonuclease P, a protein complex that generates mature tRNA molecules by cleaving their 5'-ends. The protein is Ribonuclease P protein component 3 of Methanococcus vannielii (strain ATCC 35089 / DSM 1224 / JCM 13029 / OCM 148 / SB).